The primary structure comprises 456 residues: Glycosyl hydrolase family 109 protein (456 aa).

The tat-type signal signal peptide spans 1-31; that stretch reads MKLNRRHFLKTAGLSAAGILTSQLPLSSAEA. NAD(+) contacts are provided by residues 62–63, Asp-84, 133–136, 153–154, and Asn-182; these read QR, WEWH, and EV. Residues Tyr-211, Arg-230, 242–245, and Tyr-324 each bind substrate; that span reads YPTH. Position 242 (Tyr-242) interacts with NAD(+).

This sequence belongs to the Gfo/Idh/MocA family. Glycosyl hydrolase 109 subfamily. Requires NAD(+) as cofactor. In terms of processing, predicted to be exported by the Tat system. The position of the signal peptide cleavage has not been experimentally proven.

In terms of biological role, glycosidase. In Shewanella pealeana (strain ATCC 700345 / ANG-SQ1), this protein is Glycosyl hydrolase family 109 protein.